The sequence spans 209 residues: Kynurenine formamidase (209 aa).

Residue W19 participates in substrate binding. Zn(2+) is bound by residues H49, H53, and D55. Residue H59 is the Proton donor/acceptor of the active site. Residues H160 and E172 each coordinate Zn(2+).

This sequence belongs to the Cyclase 1 superfamily. KynB family. In terms of assembly, homodimer. Zn(2+) is required as a cofactor.

It carries out the reaction N-formyl-L-kynurenine + H2O = L-kynurenine + formate + H(+). It functions in the pathway amino-acid degradation; L-tryptophan degradation via kynurenine pathway; L-kynurenine from L-tryptophan: step 2/2. Functionally, catalyzes the hydrolysis of N-formyl-L-kynurenine to L-kynurenine, the second step in the kynurenine pathway of tryptophan degradation. This Geobacillus thermodenitrificans (strain NG80-2) protein is Kynurenine formamidase.